Consider the following 863-residue polypeptide: Receptor-like protein 9DC1 (863 aa).

The N-terminal stretch at 1–21 is a signal peptide; it reads MGCVKLVFFMLYVFLFQLVSS. Residues 22-812 lie on the Extracellular side of the membrane; that stretch reads SSLPHLCPED…EEDSPMISWQ (791 aa). The segment at 24–90 is N-cap; the sequence is LPHLCPEDQA…GVHCDETTGQ (67 aa). N-linked (GlcNAc...) asparagine glycans are attached at residues Asn71 and Asn108. An LRR 1; degenerate repeat occupies 91 to 114; the sequence is VIALDLRCSQLQGKFHSNSSLFQL. LRR repeat units lie at residues 115–138 and 140–163; these read SNLK…KFGE and SDLT…ISHL. The stretch at 164–190 is one LRR 4; degenerate repeat; that stretch reads SKLHVLLIGDQYGLSIVPHNFEPLLKN. Residues Asn190, Asn203, and Asn211 are each glycosylated (N-linked (GlcNAc...) asparagine). LRR repeat units lie at residues 191–213, 214–237, 240–262, 264–286, 287–311, and 312–336; these read LTQL…SNFS, SHLT…VFHL, LEFL…KWNS, ASLM…SFSH, LTSL…LWNL, and TNIE…IFEK. N-linked (GlcNAc...) asparagine glycosylation is present at Asn261. Residues Asn299 and Asn310 are each glycosylated (N-linked (GlcNAc...) asparagine). An LRR 11; degenerate repeat occupies 337-357; it reads LKKLSLFRNDNLDGGLEFLSF. LRR repeat units follow at residues 358-382, 383-406, 408-428, 429-452, 454-476, 477-500, 502-524, 525-549, 551-572, 573-597, 599-623, 667-690, 691-714, 715-739, and 741-759; these read NTQL…ISGL, QNLE…IFSL, SLVE…EFKS, KTLS…LLNQ, NLQL…ICNL, KTLI…VVER, EYLS…TFSV, GNIL…MINC, YLTL…WLGY, LFQL…GNTN, FMGL…ILGN, LDSN…IIGD, LVGL…SFQN, LSVL…LASL, and FLEV…IPKG. N-linked (GlcNAc...) asparagine glycans are attached at residues Asn378, Asn396, and Asn416. N-linked (GlcNAc...) asparagine glycosylation is present at Asn464. Asn519 carries an N-linked (GlcNAc...) asparagine glycan. N-linked (GlcNAc...) asparagine glycosylation is present at Asn563. N-linked (GlcNAc...) asparagine glycosylation is found at Asn674, Asn698, and Asn714. Asn746 and Asn767 each carry an N-linked (GlcNAc...) asparagine glycan. A C-cap/acidic domain region spans residues 760–812; it reads KQFDSFGNTSYQGNDGLRGFPLSKLCGGEDQVTTPAELDQEEEEEDSPMISWQ. A helical transmembrane segment spans residues 813–833; that stretch reads GVLVGYGCGLVIGLSVIYIMW. Topologically, residues 834 to 863 are cytoplasmic; sequence STQYPAWFSRMDLKLEHIITTKMKKHKKRY.

Belongs to the RLP family.

It localises to the cell membrane. In terms of biological role, involved in plant defense. Confers resistance to the fungal pathogen C.fulvum through recognition of the AVR9 elicitor protein. This chain is Receptor-like protein 9DC1, found in Solanum pimpinellifolium (Currant tomato).